The following is a 316-amino-acid chain: Na(+)/H(+) exchange regulatory cofactor NHE-RF2 (316 aa).

Residues 11–91 enclose the PDZ 1 domain; that stretch reads LCRLVRGEQG…ETRLLVVDKE (81 aa). The segment at 109–148 is disordered; it reads QRGLPPAHDPWEPKPDWARAGSLSSDAGQKDVNGPPRELR. 3 positions are modified to phosphoserine: serine 130, serine 183, and serine 254. Residues 151-231 form the PDZ 2 domain; that stretch reads LCHLRKGPQG…EARLLLVDPE (81 aa). The disordered stretch occupies residues 244–303; that stretch reads TEEHVEGPLPSPITNGTSPAQDASAWKRDPFQESGLHLSPTAAEAKEKARATRVNKRAPQ. The span at 255–264 shows a compositional bias: polar residues; sequence PITNGTSPAQ. Serine 282 is modified (phosphoserine).

As to quaternary structure, homodimer, and heterodimer with NHERF1. Binds ADRB2, SLC9A3, P2RY1, P2YR2, SRY, RDX, PDZK1 and LPAR2. Found in a complex with EZR, PODXL and NHERF2. Interacts (via the PDZ domains) with PODXL (via the C-terminal PDZ-binding motif DTHL); interaction is detected in glomerular epithelium cells. Binds PODXL. Interacts with SGK1 and KCNJ1/ROMK1. Interacts (via the PDZ domains) with SLC26A6. Detected in kidney glomeruli.

The protein resides in the endomembrane system. It is found in the nucleus. It localises to the apical cell membrane. Scaffold protein that connects plasma membrane proteins with members of the ezrin/moesin/radixin family and thereby helps to link them to the actin cytoskeleton and to regulate their surface expression. Necessary for cAMP-mediated phosphorylation and inhibition of SLC9A3. May also act as scaffold protein in the nucleus. In Oryctolagus cuniculus (Rabbit), this protein is Na(+)/H(+) exchange regulatory cofactor NHE-RF2 (NHERF2).